Consider the following 764-residue polypeptide: A-type ATP synthase subunit A (764 aa).

This sequence belongs to the ATPase alpha/beta chains family. In terms of assembly, has multiple subunits with at least A(3), B(3), C, D, E, F, H, I and proteolipid K(x). Post-translationally, this protein undergoes a protein self splicing that involves a post-translational excision of the VDE intervening region (intein) followed by peptide ligation.

The protein localises to the cell membrane. The enzyme catalyses ATP + H2O + 4 H(+)(in) = ADP + phosphate + 5 H(+)(out). Component of the A-type ATP synthase that produces ATP from ADP in the presence of a proton gradient across the membrane. The A chain is the catalytic subunit. The protein is A-type ATP synthase subunit A of Thermoplasma acidophilum (strain ATCC 25905 / DSM 1728 / JCM 9062 / NBRC 15155 / AMRC-C165).